The sequence spans 333 residues: MAVRRDSVWKYCWGVLMVLCRTAISKSIVLEPIYWNSSNSKFLPGQGLVLYPQIGDKLDIICPKVDSKTVGQYEYYKVYMVDKDQADRCTIKKENTPLLNCAKPDQDIKFTIKFQEFSPNLWGLEFQKNKDYYIISTSNGSLEGLDNQEGGVCQTRAMKILMKVGQDASSAGSTRNKDPTRRPELEAGTNGRSSTTSPFVKPNPGSSTDGNSAGHSGNNILGSEVALFAGIASGCIIFIVIIITLVVLLLKYRRRHRKHSPQHTTTLSLSTLATPKRSGNNNGSEPSDIIIPLRTADSVFCPHYEKVSGDYGHPVYIVQEMPPQSPANIYYKV.

Residues 1–27 form the signal peptide; the sequence is MAVRRDSVWKYCWGVLMVLCRTAISKS. Positions 28–164 constitute an Ephrin RBD domain; that stretch reads IVLEPIYWNS…TRAMKILMKV (137 aa). At 28–229 the chain is on the extracellular side; that stretch reads IVLEPIYWNS…ILGSEVALFA (202 aa). N-linked (GlcNAc...) asparagine glycosylation occurs at Asn-36. 2 disulfide bridges follow: Cys-62-Cys-101 and Cys-89-Cys-153. Asn-139 is a glycosylation site (N-linked (GlcNAc...) asparagine). The tract at residues 165 to 213 is disordered; that stretch reads GQDASSAGSTRNKDPTRRPELEAGTNGRSSTTSPFVKPNPGSSTDGNSA. Residues 175–185 are compositionally biased toward basic and acidic residues; the sequence is RNKDPTRRPEL. Residues 190–213 show a composition bias toward polar residues; sequence NGRSSTTSPFVKPNPGSSTDGNSA. Residues 230 to 250 form a helical membrane-spanning segment; sequence GIASGCIIFIVIIITLVVLLL. At 251-333 the chain is on the cytoplasmic side; that stretch reads KYRRRHRKHS…QSPANIYYKV (83 aa). Ser-260 is subject to Phosphoserine. Thr-274 carries the post-translational modification Phosphothreonine. The residue at position 277 (Arg-277) is an Omega-N-methylarginine. The PDZ-binding motif lies at 331-333; it reads YKV.

It belongs to the ephrin family. As to quaternary structure, interacts with PDZRN3. Binds to the receptor tyrosine kinases EPHA4, EPHB4 and EPHA3. In terms of assembly, (Microbial infection) Interacts with Hendra virus and Nipah virus G protein. Post-translationally, inducible phosphorylation of tyrosine residues in the cytoplasmic domain. As to expression, lung and kidney.

Its subcellular location is the cell membrane. The protein resides in the cell junction. It is found in the adherens junction. Its function is as follows. Cell surface transmembrane ligand for Eph receptors, a family of receptor tyrosine kinases which are crucial for migration, repulsion and adhesion during neuronal, vascular and epithelial development. Binds promiscuously Eph receptors residing on adjacent cells, leading to contact-dependent bidirectional signaling into neighboring cells. The signaling pathway downstream of the receptor is referred to as forward signaling while the signaling pathway downstream of the ephrin ligand is referred to as reverse signaling. Binds to receptor tyrosine kinase including EPHA4, EPHA3 and EPHB4. Together with EPHB4 plays a central role in heart morphogenesis and angiogenesis through regulation of cell adhesion and cell migration. EPHB4-mediated forward signaling controls cellular repulsion and segregation from EFNB2-expressing cells. May play a role in constraining the orientation of longitudinally projecting axons. Functionally, (Microbial infection) Acts as a receptor for Hendra virus and Nipah virus. The sequence is that of Ephrin-B2 (EFNB2) from Homo sapiens (Human).